Reading from the N-terminus, the 460-residue chain is 5-hydroxytryptamine receptor 2C (460 aa).

Positions 1-32 (MVNLGNAVRSLLMHLIGLLVWQFDISISPVAA) are cleaved as a signal peptide. Residues 33-56 (IVTDTFNSSDGGRLFQFPDGVQNW) lie on the Extracellular side of the membrane. Residues 57–81 (PALSIVVIIIMTIGGNILVIMAVSM) traverse the membrane as a helical segment. At 82–87 (EKKLHN) the chain is on the cytoplasmic side. The helical transmembrane segment at 88-112 (ATNYFLMSLAIADMLVGLLVMPLSL) threads the bilayer. At 113-129 (LAILYDYVWPLPRYLCP) the chain is on the extracellular side. C128 and C208 are joined by a disulfide. Residues 130-152 (VWISLDVLFSTASIMHLCAISLD) traverse the membrane as a helical segment. T140 provides a ligand contact to ergotamine. The short motif at 152-154 (DRY) is the DRY motif; important for ligand-induced conformation changes element. The Cytoplasmic segment spans residues 153-168 (RYVAIRNPIEHSRFNS). Residues 169–190 (RTKAIMKIAIVWAISIGVSVPI) form a helical membrane-spanning segment. Over 191-214 (PVIGLRDESKVFVNNTTCVLNDPN) the chain is Extracellular. N-linked (GlcNAc...) asparagine glycans are attached at residues N204 and N205. Ergotamine is bound at residue L210. The chain crosses the membrane as a helical span at residues 215–237 (FVLIGSFVAFFIPLTIMVITYFL). Residues 238 to 313 (TIYVLRRQTL…AINNEKKASK (76 aa)) are Cytoplasmic-facing. The segment at 276 to 301 (EEENAPNPNPDQKPRRKKKEKRPRGT) is disordered. A compositionally biased stretch (basic residues) spans 289–299 (PRRKKKEKRPR). A helical membrane pass occupies residues 314-338 (VLGIVFFVFLIMWCPFFITNILSVL). Residues C339 and C343 are joined by a disulfide bond. Over 339–349 (CGKACNQKLME) the chain is Extracellular. Residues 350-372 (KLLNVFVWIGYVCSGINPLVYTL) form a helical membrane-spanning segment. The NPxxY motif; important for ligand-induced conformation changes and signaling signature appears at 366–370 (NPLVY). Residues 373–460 (FNKIYRRAFS…NVVSERISSV (88 aa)) lie on the Cytoplasmic side of the membrane. The short motif at 458 to 460 (SSV) is the PDZ-binding element.

The protein belongs to the G-protein coupled receptor 1 family. As to quaternary structure, interacts with MPDZ. Interacts with ARRB2. Interacts with MPP3; this interaction stabilizes the receptor at the plasma membrane and prevents the desensitization of the HTR2C receptor-mediated calcium response.

The protein localises to the cell membrane. Its function is as follows. G-protein coupled receptor for 5-hydroxytryptamine (serotonin). Also functions as a receptor for various drugs and psychoactive substances, including ergot alkaloid derivatives, 1-2,5,-dimethoxy-4-iodophenyl-2-aminopropane (DOI) and lysergic acid diethylamide (LSD). Ligand binding causes a conformation change that triggers signaling via guanine nucleotide-binding proteins (G proteins) and modulates the activity of downstream effectors. HTR2C is coupled to G(q)/G(11) G alpha proteins and activates phospholipase C-beta, releasing diacylglycerol (DAG) and inositol 1,4,5-trisphosphate (IP3) second messengers that modulate the activity of phosphatidylinositol 3-kinase and promote the release of Ca(2+) ions from intracellular stores, respectively. Beta-arrestin family members inhibit signaling via G proteins and mediate activation of alternative signaling pathways. Regulates neuronal activity via the activation of short transient receptor potential calcium channels in the brain, and thereby modulates the activation of pro-opiomelanocortin neurons and the release of CRH that then regulates the release of corticosterone. Plays a role in the regulation of appetite and eating behavior, responses to anxiogenic stimuli and stress. Plays a role in insulin sensitivity and glucose homeostasis. In Rattus norvegicus (Rat), this protein is 5-hydroxytryptamine receptor 2C.